The chain runs to 335 residues: Probable nicotianamine synthase 2 (335 aa).

This sequence belongs to the nicotianamine synthase (NAS)-like family.

It carries out the reaction 3 S-adenosyl-L-methionine = nicotianamine + 3 S-methyl-5'-thioadenosine + 3 H(+). Synthesizes nicotianamine, a polyamine that is the first intermediate in the synthesis of the phytosiderophores of the mugineic acid type found in gramineae which serves as a sensor for the physiological iron status within the plant, and/or might be involved in the transport of iron. This Hordeum vulgare (Barley) protein is Probable nicotianamine synthase 2 (NAS2).